The following is a 225-amino-acid chain: Proteoglycan 3 (225 aa).

The N-terminal stretch at 1–17 is a signal peptide; that stretch reads MQCLLLLPFLLLGTVSA. Positions 107 to 224 constitute a C-type lectin domain; sequence CKICRYLLVR…CDKQLPFVCS (118 aa). 2 cysteine pairs are disulfide-bonded: Cys-128–Cys-223 and Cys-200–Cys-215.

As to expression, expressed in bone marrow. Not detected in placenta.

The protein resides in the cytoplasmic granule. In terms of biological role, possesses similar cytotoxic and cytostimulatory activities to PRG2/MBP. In vitro, stimulates neutrophil superoxide production and IL8 release, and histamine and leukotriene C4 release from basophils. The protein is Proteoglycan 3 of Homo sapiens (Human).